The primary structure comprises 614 residues: UvrABC system protein C (614 aa).

The region spanning 14–91 is the GIY-YIG domain; the sequence is TSPGCYIHKD…IKENKPKYNI (78 aa). The 36-residue stretch at 196 to 231 folds into the UVR domain; it reads DKIIDDLKSKMAVAAQSMEFERAAEYRDLIQAIGTL. The disordered stretch occupies residues 595 to 614; that stretch reads LPQVAEERVDYQTEGNHNEP. Residues 599 to 614 are compositionally biased toward basic and acidic residues; sequence AEERVDYQTEGNHNEP.

This sequence belongs to the UvrC family. As to quaternary structure, interacts with UvrB in an incision complex.

The protein resides in the cytoplasm. In terms of biological role, the UvrABC repair system catalyzes the recognition and processing of DNA lesions. UvrC both incises the 5' and 3' sides of the lesion. The N-terminal half is responsible for the 3' incision and the C-terminal half is responsible for the 5' incision. This is UvrABC system protein C from Streptococcus pneumoniae serotype 4 (strain ATCC BAA-334 / TIGR4).